Consider the following 328-residue polypeptide: uncharacterized protein (328 aa).

The 143-residue stretch at 37 to 179 (LTERLLCHQG…AMTVLRCRKI (143 aa)) folds into the SIS domain. 52–57 (GIGKSG) serves as a coordination point for ATP. 2 consecutive CBS domains span residues 205–264 (LSPR…GGAI) and 273–328 (MTRK…AGLL).

It belongs to the SIS family. GutQ/KpsF subfamily.

This is an uncharacterized protein from Chlamydia muridarum (strain MoPn / Nigg).